The chain runs to 183 residues: Apo-citrate lyase phosphoribosyl-dephospho-CoA transferase (183 aa).

It belongs to the CitX family.

It carries out the reaction apo-[citrate lyase ACP] + 2'-(5''-triphospho-alpha-D-ribosyl)-3'-dephospho-CoA = holo-[citrate lyase ACP] + diphosphate. Transfers 2-(5''-triphosphoribosyl)-3'-dephosphocoenzyme-A on a serine residue to the apo-acyl carrier protein (gamma chain) of the citrate lyase to yield holo-acyl carrier protein. The polypeptide is Apo-citrate lyase phosphoribosyl-dephospho-CoA transferase (Escherichia coli O139:H28 (strain E24377A / ETEC)).